The primary structure comprises 387 residues: Mannitol-1-phosphate 5-dehydrogenase (387 aa).

3–14 (ALHFGAGNIGRG) lines the NAD(+) pocket.

Belongs to the mannitol dehydrogenase family.

The catalysed reaction is D-mannitol 1-phosphate + NAD(+) = beta-D-fructose 6-phosphate + NADH + H(+). This is Mannitol-1-phosphate 5-dehydrogenase from Yersinia pseudotuberculosis serotype IB (strain PB1/+).